The primary structure comprises 174 residues: Endoribonuclease YbeY (174 aa).

Zn(2+) contacts are provided by His-129, His-133, and His-139.

The protein belongs to the endoribonuclease YbeY family. Requires Zn(2+) as cofactor.

The protein localises to the cytoplasm. In terms of biological role, single strand-specific metallo-endoribonuclease involved in late-stage 70S ribosome quality control and in maturation of the 3' terminus of the 16S rRNA. In Lactobacillus helveticus (strain DPC 4571), this protein is Endoribonuclease YbeY.